A 105-amino-acid polypeptide reads, in one-letter code: dATP/dGTP diphosphohydrolase (105 aa).

The protein belongs to the Caudovirales dATP/dGTP diphosphohydrolase family. Co(2+) is required as a cofactor.

The catalysed reaction is dGTP + H2O = dGMP + diphosphate + H(+). The enzyme catalyses dATP + H2O = dAMP + diphosphate + H(+). Its pathway is purine metabolism. Functionally, catalyzes the hydrolysis of dGTP into dGMP, which is needed among other for the first step of biosynthesis of dZTP (2-amino-2'-deoxyadenosine-5'-triphosphate). The sequence is that of dATP/dGTP diphosphohydrolase from Cyanophage S-2L (Cyanobacteria phage S-2L).